Reading from the N-terminus, the 525-residue chain is GMP synthase [glutamine-hydrolyzing] (525 aa).

Residues 9–207 form the Glutamine amidotransferase type-1 domain; it reads RILILDFGSQ…VQDICGCEAL (199 aa). Cys86 functions as the Nucleophile in the catalytic mechanism. Residues His181 and Glu183 contribute to the active site. The GMPS ATP-PPase domain maps to 208–400; that stretch reads WTASNIVEDA…LGLPYDMVYR (193 aa). 235 to 241 lines the ATP pocket; sequence SGGVDSS.

As to quaternary structure, homodimer.

The enzyme catalyses XMP + L-glutamine + ATP + H2O = GMP + L-glutamate + AMP + diphosphate + 2 H(+). It participates in purine metabolism; GMP biosynthesis; GMP from XMP (L-Gln route): step 1/1. In terms of biological role, catalyzes the synthesis of GMP from XMP. The chain is GMP synthase [glutamine-hydrolyzing] from Pseudomonas entomophila (strain L48).